A 227-amino-acid polypeptide reads, in one-letter code: Protein GET1 (227 aa).

The Lumenal segment spans residues 1 to 3 (MSL). The chain crosses the membrane as a helical span at residues 4–23 (LLTVFLIVFVTQLISWIGQN). The Cytoplasmic portion of the chain corresponds to 24-107 (VLLEWAYNLY…SFSTKFNAVI (84 aa)). Residues 72 to 96 (AKLRRSVDKGLAELEKLNSEIATAK) are a coiled coil. The chain crosses the membrane as a helical span at residues 108-128 (WALTSGVNLVIGWWYGRKAVF). Residues 129–151 (YLPEGWMGPLTWWFSFPFAPRGS) lie on the Lumenal side of the membrane. Residues 152–168 (VSVGVWSFACKRVLLVL) form a helical membrane-spanning segment. The Cytoplasmic portion of the chain corresponds to 169–227 (ERMVKELFFAETQAKEVPVGFSPSSSSSSTPNPMSKASSGSPSPRRRTTVTVESEDEKS). Positions 184-227 (EVPVGFSPSSSSSSTPNPMSKASSGSPSPRRRTTVTVESEDEKS) are disordered. Low complexity predominate over residues 190-211 (SPSSSSSSTPNPMSKASSGSPS).

It belongs to the WRB/GET1 family. In terms of assembly, interacts with GET3.

The protein resides in the endoplasmic reticulum membrane. Required for the post-translational delivery of tail-anchored (TA) proteins to the endoplasmic reticulum. Acts as a membrane receptor for soluble GET3, which recognizes and selectively binds the transmembrane domain of TA proteins in the cytosol. The protein is Protein GET1 of Coprinopsis cinerea (strain Okayama-7 / 130 / ATCC MYA-4618 / FGSC 9003) (Inky cap fungus).